Here is a 44-residue protein sequence, read N- to C-terminus: Pandinin-1 (44 aa).

As to expression, expressed by the venom gland.

The protein resides in the secreted. It localises to the target cell membrane. Disrupts cell membranes through formation of pores. Strong antimicrobial activity against Gram-positive bacteria B.subtilis, S.epidermidis, E.faecalis and S.aureus. Less active against Gram-negative bacteria P.aeruginosa and E.coli. Has no antifungal or hemolytic activity. The protein is Pandinin-1 of Pandinus imperator (Emperor scorpion).